Consider the following 519-residue polypeptide: DDB1- and CUL4-associated factor 17 (519 aa).

A run of 2 helical transmembrane segments spans residues 186 to 206 (VLLY…ILEI) and 222 to 242 (GILI…QAII).

In terms of assembly, interacts with DDB1, CUL4A and CUL4B. Ubiquitously expressed in the embryo, with higher expression in brain, liver and skin tissues.

The protein resides in the membrane. Its subcellular location is the nucleus. It localises to the nucleolus. It functions in the pathway protein modification; protein ubiquitination. May function as a substrate receptor for CUL4-DDB1 E3 ubiquitin-protein ligase complex. This chain is DDB1- and CUL4-associated factor 17 (Dcaf17), found in Mus musculus (Mouse).